The primary structure comprises 326 residues: Glyceraldehyde-3-phosphate dehydrogenase, cytosolic (326 aa).

Residues 2–3, aspartate 24, and arginine 71 each bind NAD(+); that span reads RI. D-glyceraldehyde 3-phosphate-binding positions include 142–144, threonine 173, 202–203, and arginine 225; these read SCT and TG. The active-site Nucleophile is the cysteine 143. Asparagine 307 is a binding site for NAD(+).

The protein belongs to the glyceraldehyde-3-phosphate dehydrogenase family.

It is found in the cytoplasm. The enzyme catalyses D-glyceraldehyde 3-phosphate + phosphate + NAD(+) = (2R)-3-phospho-glyceroyl phosphate + NADH + H(+). It participates in carbohydrate degradation; glycolysis; pyruvate from D-glyceraldehyde 3-phosphate: step 1/5. In terms of biological role, key enzyme in glycolysis that catalyzes the first step of the pathway by converting D-glyceraldehyde 3-phosphate (G3P) into 3-phospho-D-glyceroyl phosphate. Essential for the maintenance of cellular ATP levels and carbohydrate metabolism. In Nicotiana tabacum (Common tobacco), this protein is Glyceraldehyde-3-phosphate dehydrogenase, cytosolic (GAPC).